We begin with the raw amino-acid sequence, 171 residues long: Ribosome maturation factor RimM (171 aa).

In terms of domain architecture, PRC barrel spans P96–L170.

The protein belongs to the RimM family. Binds ribosomal protein uS19.

It localises to the cytoplasm. An accessory protein needed during the final step in the assembly of 30S ribosomal subunit, possibly for assembly of the head region. Essential for efficient processing of 16S rRNA. May be needed both before and after RbfA during the maturation of 16S rRNA. It has affinity for free ribosomal 30S subunits but not for 70S ribosomes. The sequence is that of Ribosome maturation factor RimM from Heliobacterium modesticaldum (strain ATCC 51547 / Ice1).